Reading from the N-terminus, the 775-residue chain is Kinesin-like protein KIF3B (775 aa).

The region spanning 9–341 (SVKVVVRCRP…LRYANRAKNI (333 aa)) is the Kinesin motor domain. Residue 97-104 (GQTGTGKT) coordinates ATP. The tract at residues 372–419 (KRSGRKRRRRRRRRVGEGGEEFEDGEDEEDDDDDDEDEEEGVDADKNI) is disordered. Positions 374–385 (SGRKRRRRRRRR) are enriched in basic residues. Residues 389–413 (GGEEFEDGEDEEDDDDDDEDEEEGV) show a composition bias toward acidic residues. Residues 501 to 591 (LELKRQEIAE…QNELTRELKL (91 aa)) are a coiled coil. The interval 716-775 (FHASLGSSPGLSASAAGFSKKPKSGRPKTGKKVSTPTSAHSPLSGSGSPLYPQSRGLVPK) is disordered. Residues 718–734 (ASLGSSPGLSASAAGFS) are compositionally biased toward low complexity. Positions 735–746 (KKPKSGRPKTGK) are enriched in basic residues. Low complexity predominate over residues 756 to 765 (SPLSGSGSPL).

It belongs to the TRAFAC class myosin-kinesin ATPase superfamily. Kinesin family. Heterodimer of KIF3A and KIF3B. KIF3A/KIF3B heterodimer interacts with KIFAP3 forming a heterotrimeric (KIF3A/KIF3B/KIFAP3) complex.

It is found in the cytoplasm. The protein localises to the cytoskeleton. Its subcellular location is the cell projection. The protein resides in the cilium. It localises to the dendritic spine. Its function is as follows. Microtubule-based molecular motor that transport intracellular cargos, such as vesicles, organelles and protein complexes. Uses ATP hydrolysis to generate force to bind and move along the microtubule. Plays a role in cilia formation. Required for photoreceptor development. This is Kinesin-like protein KIF3B from Danio rerio (Zebrafish).